A 544-amino-acid polypeptide reads, in one-letter code: Chaperonin GroEL 1 (544 aa).

ATP-binding positions include 29–32 (TLGP), Lys50, 86–90 (DGTTT), Gly414, and Asp494.

Belongs to the chaperonin (HSP60) family. Forms a cylinder of 14 subunits composed of two heptameric rings stacked back-to-back. Interacts with the co-chaperonin GroES.

Its subcellular location is the cytoplasm. The catalysed reaction is ATP + H2O + a folded polypeptide = ADP + phosphate + an unfolded polypeptide.. In terms of biological role, together with its co-chaperonin GroES, plays an essential role in assisting protein folding. The GroEL-GroES system forms a nano-cage that allows encapsulation of the non-native substrate proteins and provides a physical environment optimized to promote and accelerate protein folding. This chain is Chaperonin GroEL 1, found in Psychromonas ingrahamii (strain DSM 17664 / CCUG 51855 / 37).